The primary structure comprises 291 residues: MASMRDIKRRKESIQSTGQITKAMKLVSTVKLQKAKSKAENAKPYFDHMYDTVLNMLRKSGNISHPYLSAGKSNKKAIIVITSNRGLAGGYNSNILKLVMSSDINKEDAVVYAVGRKGKEALARRGYHIAKDYSEVMNAPIYKDAIEIGKAVLDAFVADEVGEIYLAYTSFKNTVSHEPTLIKLLPVDMEAALQEGEKSEDLNERLTLMNYEPAAEEALNLIIPKYINSLIYGALVQALASENGARMQAMDSATNNAEDMISDLSLKYNRARQSSITQELTEIIAGANAIN.

Belongs to the ATPase gamma chain family. F-type ATPases have 2 components, CF(1) - the catalytic core - and CF(0) - the membrane proton channel. CF(1) has five subunits: alpha(3), beta(3), gamma(1), delta(1), epsilon(1). CF(0) has three main subunits: a, b and c.

It localises to the cell membrane. Its function is as follows. Produces ATP from ADP in the presence of a proton gradient across the membrane. The gamma chain is believed to be important in regulating ATPase activity and the flow of protons through the CF(0) complex. The polypeptide is ATP synthase gamma chain (Lachnoclostridium phytofermentans (strain ATCC 700394 / DSM 18823 / ISDg) (Clostridium phytofermentans)).